Here is a 445-residue protein sequence, read N- to C-terminus: Methylenetetrahydrofolate--tRNA-(uracil-5-)-methyltransferase TrmFO (445 aa).

Residue 9-14 (GGGLAG) coordinates FAD.

The protein belongs to the MnmG family. TrmFO subfamily. FAD is required as a cofactor.

It is found in the cytoplasm. It catalyses the reaction uridine(54) in tRNA + (6R)-5,10-methylene-5,6,7,8-tetrahydrofolate + NADH + H(+) = 5-methyluridine(54) in tRNA + (6S)-5,6,7,8-tetrahydrofolate + NAD(+). It carries out the reaction uridine(54) in tRNA + (6R)-5,10-methylene-5,6,7,8-tetrahydrofolate + NADPH + H(+) = 5-methyluridine(54) in tRNA + (6S)-5,6,7,8-tetrahydrofolate + NADP(+). Catalyzes the folate-dependent formation of 5-methyl-uridine at position 54 (M-5-U54) in all tRNAs. The polypeptide is Methylenetetrahydrofolate--tRNA-(uracil-5-)-methyltransferase TrmFO (Solibacter usitatus (strain Ellin6076)).